The sequence spans 255 residues: 6-phosphogluconolactonase 4 (255 aa).

It belongs to the glucosamine/galactosamine-6-phosphate isomerase family. 6-phosphogluconolactonase subfamily.

The protein localises to the cytoplasm. It catalyses the reaction 6-phospho-D-glucono-1,5-lactone + H2O = 6-phospho-D-gluconate + H(+). It participates in carbohydrate degradation; pentose phosphate pathway; D-ribulose 5-phosphate from D-glucose 6-phosphate (oxidative stage): step 2/3. In terms of biological role, involved in the pentose phosphate pathway via hydrolysis of 6-phosphogluconolactone to 6-phosphogluconate. The polypeptide is 6-phosphogluconolactonase 4 (Saccharomyces cerevisiae (strain ATCC 204508 / S288c) (Baker's yeast)).